The following is a 238-amino-acid chain: Tabinhibitin 5 (238 aa).

Residues 1-23 (MTSILVSRFLLAALVLQYATIDA) form the signal peptide. The Cell attachment site motif lies at 32-34 (RGD). Positions 67–211 (LSKINDVRDH…KARALLTCNF (145 aa)) constitute an SCP domain.

This sequence belongs to the CRISP family. Expressed in salivary glands.

The protein resides in the secreted. Its function is as follows. Inhibits platelet aggregation induced by all agonists tested (ADP, arachidonic acid, the thromboxane A2 analog U46619, thrombin, and snake venom snaclecs (TMVA that activates platelet through GPIB, and stejnulxin that specifically acts through GPVI (GP6))). May act by competing with fibrinogen for binding to glycoprotein IIb/IIIa (ITGA2B/ITGB3). In Tabanus yao (Horsefly), this protein is Tabinhibitin 5.